We begin with the raw amino-acid sequence, 341 residues long: tRNA N6-adenosine threonylcarbamoyltransferase (341 aa).

Fe cation is bound by residues His-111 and His-115. Residues 133–137, Asp-166, Gly-179, Asp-183, and Asn-271 contribute to the substrate site; that span reads VVSGG. Asp-299 contributes to the Fe cation binding site.

The protein belongs to the KAE1 / TsaD family. Requires Fe(2+) as cofactor.

It is found in the cytoplasm. It carries out the reaction L-threonylcarbamoyladenylate + adenosine(37) in tRNA = N(6)-L-threonylcarbamoyladenosine(37) in tRNA + AMP + H(+). Functionally, required for the formation of a threonylcarbamoyl group on adenosine at position 37 (t(6)A37) in tRNAs that read codons beginning with adenine. Is involved in the transfer of the threonylcarbamoyl moiety of threonylcarbamoyl-AMP (TC-AMP) to the N6 group of A37, together with TsaE and TsaB. TsaD likely plays a direct catalytic role in this reaction. The protein is tRNA N6-adenosine threonylcarbamoyltransferase of Fusobacterium nucleatum subsp. nucleatum (strain ATCC 25586 / DSM 15643 / BCRC 10681 / CIP 101130 / JCM 8532 / KCTC 2640 / LMG 13131 / VPI 4355).